The sequence spans 378 residues: Polar flagellin B/D (378 aa).

Coiled coils occupy residues 103–128 (SNSKAERVAIQEEVTALNDELNRIAE) and 311–340 (AFQNRFNHAISNLDNINENVNASKSRIKDT).

The protein belongs to the bacterial flagellin family. As to quaternary structure, heteromer of multiple flagellin subunits including FlaA, FlaB/D, FlaC, FlaE and FlaF.

The protein resides in the secreted. Its subcellular location is the bacterial flagellum. Functionally, flagellin is the subunit protein which polymerizes to form the filaments of bacterial flagella. FlaB/D is not essential for polar flagellar synthesis and swimming motility. Homomer of FlaB/D is not able to form a functional filament. This chain is Polar flagellin B/D (flaB), found in Vibrio parahaemolyticus serotype O3:K6 (strain RIMD 2210633).